A 201-amino-acid chain; its full sequence is ADP-ribosylation factor-related protein 1 (201 aa).

M1 is modified (N-acetylmethionine). GTP is bound by residues 24 to 31 (GLDNAGKT), 75 to 79 (DLGGQ), and 134 to 137 (NKQD).

This sequence belongs to the small GTPase superfamily. Arf family. Interacts with SYS1.

The protein localises to the golgi apparatus. The protein resides in the trans-Golgi network. In terms of biological role, trans-Golgi-associated GTPase that regulates protein sorting. Controls the targeting of ARL1 and its effector to the trans-Golgi. Required for the lipidation of chylomicrons in the intestine and required for VLDL lipidation in the liver. The protein is ADP-ribosylation factor-related protein 1 (Arfrp1) of Mus musculus (Mouse).